The sequence spans 1606 residues: MANADVLKVSILGKESIHCGFHLIPYIAQTVLSNLPSSTYVLVTDTNVANFHLTAFEKEFEQRISSLPTSSTKPRFLSLVIPPGETSKSREGKANIEDFLLLHRCTRDSVILALGGGVIGDLVGFVAATFMRGVRFVQIPTTLLAMVDSSVGGKTAIDTPHGKNLIGAFWQPEYIFIDAAFLETLPSREFSNGMAEVVKTAAIWNEAEFISLESRSADIFAAIQTPSADYAGRSKQTRSIAQELLLSVIVGSISVKAHIVTIDERETGLRNLVNFGHTIGHAIEAVLTPTILHGECVSVGMILEGEISRQMGILSQVGVGRLNRCLKAYNLPVTLADPRIASLPAAKLLTVERLLDIMRIDKKNSGPEKKIVILSRIGATYEPKATVVPDSIIAKTLSEAAKVIPGVPRHHPVKMATPGSKSISNRALVLAALGKGTCRLKNLLHSDDTQVMMAALNELKGASFAWEDAGETLVVKGGEGSLSVPPKGKELYLGNAGTAARFLTTVCTLVQSSPQDNAEYTVITGNARMKQRPIGPLVTALQANGSKIDFLESEGCLPLAIAPQGLKGSQLQLAASVSSQYVSSILLCAPYAEEPITLELIGGQVISQPYIDMTVAMMKTFGVDVVRRKDPVTGKFLDVYEIPKAVYTNPPEYNIESDASSATYPLAIAAVTGTSCTIQNIGSASLQGDAKFAKEVLEKMGCQVSQTATETTVQGPPIGQLKAIEEVDMEVMTDAFLTATALAAVANGKTRIIGIANQRVKECNRIRAMIDELAKFGVETIELDDGLEIIGKPISDLKRGVSVHCYDDHRVAMAFSVLSTVVEGTIIEEKRCVEKTWPNWWDDLENKIGLTVQGVDLASVASEASASGTINHDSAASIILIGMRGTGKTFVGNLAAATLSWTCLDADAYFETKHEMGVREFVHQKGWQAFRDAEFEVLRELIAEKSQGHVISLGGGIVETPAARELLKEYAATKGPVVHIVRPIDEVIRYLNSEASRPAYDEAIVDVFRRREPWFGECCSHDFFNRFGDLPYSSPKATSREIARFFNHITGQRPNLAQNLTSGRRSYFLCLTYPDVTQSFPVIHELTQGVDAIELRVDLLRASKDYDSIEYSIPTLAYVSSQVAALRRVTSLPIVFTVRTQSQGGSFPDAAEKEAVELLKLALRLGVEYVDVEISLSEKKIKELVSLKGSSHMIASWHDWSGNMIWDGPVVKEKYDAAARFGDIIKIVGKANSIQDNFTLYNFVSKVNSTAGSKPFIAINMGLEGQMSRVLNSTLSPVSHPLLPSKAAPGQLSFKQIQNALHLLGLLPAQRFYLFGTPIAHSMSPTLHNTGFEILGLPHHYELLETKEVAEEIKIAIGDSAFGGASVTIPYKLDVIPLLDKLSPAAEAIGAVNTIIPRTTGSGRMLVGDNTDWLGIKACITEQLSSKPIHAALVIGAGGTARAAIYALSALNVGDIYLYNRTTSKAYELAHAFPHAPVHVLEQLGQWPNGAVPPCVIVSTVPASATTTEEETSGILLPSKLFDYRDGPAVVIDMAYKPAETPLLRLAKTAGDNWATVPGLEVLLEQGYVQFEMWTGRRCPKELVAKWLGRLTTDHKQFVFEEECES.

The tract at residues Met1–Asp390 is 3-dehydroquinate synthase. NAD(+) contacts are provided by residues Asp45–Asn47, Glu85–Lys88, Gly116–Val118, and Asp121. Arg132 provides a ligand contact to 7-phospho-2-dehydro-3-deoxy-D-arabino-heptonate. NAD(+) is bound at residue Thr141–Thr142. 7-phospho-2-dehydro-3-deoxy-D-arabino-heptonate is bound by residues Asp148 and Lys154. Lys163 contributes to the NAD(+) binding site. Asn164 is a 7-phospho-2-dehydro-3-deoxy-D-arabino-heptonate binding site. Residues Phe181–Thr184 and Asn192 contribute to the NAD(+) site. Position 196 (Glu196) interacts with Zn(2+). 7-phospho-2-dehydro-3-deoxy-D-arabino-heptonate is bound by residues Glu196–Lys199 and Lys256. Glu266 (proton acceptor; for 3-dehydroquinate synthase activity) is an active-site residue. Residues Arg270–Asn274 and His277 each bind 7-phospho-2-dehydro-3-deoxy-D-arabino-heptonate. His277 lines the Zn(2+) pocket. Residue His281 is the Proton acceptor; for 3-dehydroquinate synthase activity of the active site. His293 and Lys362 together coordinate 7-phospho-2-dehydro-3-deoxy-D-arabino-heptonate. His293 lines the Zn(2+) pocket. An EPSP synthase region spans residues Val403–Leu850. Cys832 acts as the For EPSP synthase activity in catalysis. The shikimate kinase stretch occupies residues Ala875–Cys1070. Gly882–Thr889 is a binding site for ATP. The interval Leu1071–Gln1296 is 3-dehydroquinase. His1198 functions as the Proton acceptor; for 3-dehydroquinate dehydratase activity in the catalytic mechanism. Lys1226 functions as the Schiff-base intermediate with substrate; for 3-dehydroquinate dehydratase activity in the catalytic mechanism. The tract at residues Ala1309 to Ser1606 is shikimate dehydrogenase.

The protein in the N-terminal section; belongs to the sugar phosphate cyclases superfamily. Dehydroquinate synthase family. In the 2nd section; belongs to the EPSP synthase family. It in the 3rd section; belongs to the shikimate kinase family. This sequence in the 4th section; belongs to the type-I 3-dehydroquinase family. The protein in the C-terminal section; belongs to the shikimate dehydrogenase family. In terms of assembly, homodimer. It depends on Zn(2+) as a cofactor.

Its subcellular location is the cytoplasm. It catalyses the reaction 7-phospho-2-dehydro-3-deoxy-D-arabino-heptonate = 3-dehydroquinate + phosphate. The enzyme catalyses 3-dehydroquinate = 3-dehydroshikimate + H2O. The catalysed reaction is shikimate + NADP(+) = 3-dehydroshikimate + NADPH + H(+). It carries out the reaction shikimate + ATP = 3-phosphoshikimate + ADP + H(+). It catalyses the reaction 3-phosphoshikimate + phosphoenolpyruvate = 5-O-(1-carboxyvinyl)-3-phosphoshikimate + phosphate. Its pathway is metabolic intermediate biosynthesis; chorismate biosynthesis; chorismate from D-erythrose 4-phosphate and phosphoenolpyruvate: step 2/7. It functions in the pathway metabolic intermediate biosynthesis; chorismate biosynthesis; chorismate from D-erythrose 4-phosphate and phosphoenolpyruvate: step 3/7. The protein operates within metabolic intermediate biosynthesis; chorismate biosynthesis; chorismate from D-erythrose 4-phosphate and phosphoenolpyruvate: step 4/7. It participates in metabolic intermediate biosynthesis; chorismate biosynthesis; chorismate from D-erythrose 4-phosphate and phosphoenolpyruvate: step 5/7. Its pathway is metabolic intermediate biosynthesis; chorismate biosynthesis; chorismate from D-erythrose 4-phosphate and phosphoenolpyruvate: step 6/7. Its function is as follows. The AROM polypeptide catalyzes 5 consecutive enzymatic reactions in prechorismate polyaromatic amino acid biosynthesis. The protein is Pentafunctional AROM polypeptide of Laccaria bicolor (strain S238N-H82 / ATCC MYA-4686) (Bicoloured deceiver).